An 845-amino-acid polypeptide reads, in one-letter code: MRKHSLDRWLLTAVLVVLLSSSSSFAAKKDAKKKKKSNKEVTYDGTSLIIDGKRELLYSGSIHYPRSTPEMWPSIIKRAKQGGLNTIQTYVFWNVHEPQQGKFNFSGRADLVKFIKLIQKNGMYVTLRLGPFIQAEWTHGGLPYWLREVPGIFFRTDNKQFKEHTERYVRMILDKMKEERLFASQGGPIILGQIENEYSAVQRAYKQDGLNYIKWASNLVDSMKLGIPWVMCKQNDAPDPMINACNGRHCGDTFPGPNRENKPSLWTENWTTQFRVFGDPPTQRSVEDIAYSVARFFSKNGTHVNYYMYHGGTNFGRTSAHYVTTRYYDDAPLDEYGLEKEPKYGHLKHLHNALNLCKKPLLWGQPKTEKPGKDTEIRYYEQPGTKTCAAFLANNNTEAAETIKFKGREYVIAPRSISILPDCKTVVYNTAQIVSQHTSRNFMKSKKANKKFDFKVFTETLPSKLEGNSYIPVELYGLTKDKTDYGWYTTSFKVHKNHLPTKKGVKTFVRIASLGHALHAWLNGEYLGSGHGSHEEKSFVFQKQVTLKAGENHLVMLGVLTGFPDSGSYMEHRYTGPRGISILGLTSGTLDLTESSKWGNKIGMEGEKLGIHTEEGLKKVEWKKFTGKAPGLTWYQTYFDAPESVSAATIRMHGMGKGLIWVNGEGVGRYWQSFLSPLGQPTQIEYHIPRSFLKPKKNLLVIFEEEPNVKPELMDFAIVNRDTVCSYVGENYTPSVRHWTRKKDQVQAITDNVSLTATLKCSGTKKIAAVEFASFGNPIGVCGNFTLGTCNAPVSKQVIEKHCLGKAECVIPVNKSTFQQDKKDSCKNVVKMLAVQVKCGRGKKN.

Positions 1–26 (MRKHSLDRWLLTAVLVVLLSSSSSFA) are cleaved as a signal peptide. The N-linked (GlcNAc...) asparagine glycan is linked to asparagine 104. Catalysis depends on glutamate 197, which acts as the Proton donor. Glutamate 268 serves as the catalytic Nucleophile. N-linked (GlcNAc...) asparagine glycans are attached at residues asparagine 269, asparagine 300, asparagine 395, asparagine 752, asparagine 784, and asparagine 814. An SUEL-type lectin domain is found at 751–840 (DNVSLTATLK…KMLAVQVKCG (90 aa)).

It belongs to the glycosyl hydrolase 35 family.

The protein localises to the secreted. It is found in the extracellular space. It localises to the apoplast. It carries out the reaction Hydrolysis of terminal non-reducing beta-D-galactose residues in beta-D-galactosides.. The polypeptide is Beta-galactosidase 11 (BGAL11) (Arabidopsis thaliana (Mouse-ear cress)).